Consider the following 406-residue polypeptide: Interactor protein for cytohesin exchange factors 1 (406 aa).

The 100-residue stretch at 13–112 (HADCQGWLYK…WLNKLGFAVT (100 aa)) folds into the PH domain. Disordered stretches follow at residues 120 to 173 (DEEC…FSSL), 253 to 285 (SLNN…EDDE), and 383 to 406 (PQDP…ENSL). A compositionally biased stretch (acidic residues) spans 123 to 134 (CYSESEQEDPEV). Positions 144 to 153 (ASTTSSPVAA) are enriched in low complexity. The residue at position 164 (arginine 164) is a Phosphoserine. The span at 272–285 (MADREEIKSSEDDE) shows a compositional bias: basic and acidic residues. The segment covering 392 to 406 (EVMNPTSSDCVENSL) has biased composition (polar residues).

In terms of assembly, interacts with guanine-nucleotide exchange factors PSCD1, PSCD2, PSCD3 and PSCD4.

Its subcellular location is the cytoplasm. It localises to the cell membrane. In terms of biological role, enhances the promotion of guanine-nucleotide exchange by PSCD2 on ARF6 in a concentration-dependent manner. The sequence is that of Interactor protein for cytohesin exchange factors 1 (Ipcef1) from Mus musculus (Mouse).